The chain runs to 275 residues: Large ribosomal subunit protein uL2 (275 aa).

Positions Ala224–Gly275 are disordered.

It belongs to the universal ribosomal protein uL2 family. Part of the 50S ribosomal subunit. Forms a bridge to the 30S subunit in the 70S ribosome.

One of the primary rRNA binding proteins. Required for association of the 30S and 50S subunits to form the 70S ribosome, for tRNA binding and peptide bond formation. It has been suggested to have peptidyltransferase activity; this is somewhat controversial. Makes several contacts with the 16S rRNA in the 70S ribosome. The protein is Large ribosomal subunit protein uL2 of Xanthomonas axonopodis pv. citri (strain 306).